The sequence spans 91 residues: M-myrmeciitoxin-Mb3a (91 aa).

A signal peptide spans M1–S21. The propeptide occupies P22–A54.

Homodimer; disulfide-linked. In terms of tissue distribution, expressed by the venom gland and reservoir.

The protein localises to the secreted. Functionally, causes a significant and dose-dependent histamine release, probably by influencing the signal transduction of mast cells through a non-IgE-mediated pathway. This peptide does not have cytotoxic activities. The chain is M-myrmeciitoxin-Mb3a from Myrmecia banksi (Jack jumper ant).